Here is a 162-residue protein sequence, read N- to C-terminus: Large ribosomal subunit protein uL10 (162 aa).

The protein belongs to the universal ribosomal protein uL10 family. As to quaternary structure, part of the ribosomal stalk of the 50S ribosomal subunit. The N-terminus interacts with L11 and the large rRNA to form the base of the stalk. The C-terminus forms an elongated spine to which L12 dimers bind in a sequential fashion forming a multimeric L10(L12)X complex.

Its function is as follows. Forms part of the ribosomal stalk, playing a central role in the interaction of the ribosome with GTP-bound translation factors. This is Large ribosomal subunit protein uL10 from Aliarcobacter butzleri (strain RM4018) (Arcobacter butzleri).